The chain runs to 107 residues: Phosphoribosyl-ATP pyrophosphatase 1 (107 aa).

Belongs to the PRA-PH family.

It localises to the cytoplasm. The enzyme catalyses 1-(5-phospho-beta-D-ribosyl)-ATP + H2O = 1-(5-phospho-beta-D-ribosyl)-5'-AMP + diphosphate + H(+). The protein operates within amino-acid biosynthesis; L-histidine biosynthesis; L-histidine from 5-phospho-alpha-D-ribose 1-diphosphate: step 2/9. The sequence is that of Phosphoribosyl-ATP pyrophosphatase 1 (hisE1) from Rhodopseudomonas palustris (strain ATCC BAA-98 / CGA009).